Reading from the N-terminus, the 136-residue chain is Putative zinc finger protein 818 (136 aa).

Residues 64–83 (NVCGKVLSQNSHLVNHQRIH) form a C2H2-type 1; degenerate zinc finger. The C2H2-type 2 zinc finger occupies 89 to 111 (YRCHECGKAFTQGSRFINHQIVH).

The protein belongs to the krueppel C2H2-type zinc-finger protein family.

The protein resides in the nucleus. Its function is as follows. May be involved in transcriptional regulation. This Homo sapiens (Human) protein is Putative zinc finger protein 818 (ZNF818P).